We begin with the raw amino-acid sequence, 417 residues long: GPI mannosyltransferase 2 (417 aa).

9 helical membrane passes run 10–30 (FLII…LVWL), 104–124 (IVLK…WIVY), 142–162 (LALT…LISV), 167–187 (IAFT…SFDV), 206–226 (FCFA…LFYV), 239–259 (ITSI…FVYF), 312–332 (IPNF…ITYF), 344–364 (YIWI…VQII), and 394–414 (YYVM…ACFL).

It belongs to the PIGV family.

It is found in the endoplasmic reticulum membrane. It participates in glycolipid biosynthesis; glycosylphosphatidylinositol-anchor biosynthesis. Its function is as follows. Mannosyltransferase involved in glycosylphosphatidylinositol-anchor biosynthesis. Transfers the second mannose to the glycosylphosphatidylinositol during GPI precursor assembly. This chain is GPI mannosyltransferase 2 (GPI18), found in Kluyveromyces lactis (strain ATCC 8585 / CBS 2359 / DSM 70799 / NBRC 1267 / NRRL Y-1140 / WM37) (Yeast).